The following is a 469-amino-acid chain: MKMPKTIGLVHFIGIGGIGMSGIAEVLHNLGHRVQGSDQSDSANVQRLREKGIKISVGHKAENLGDAEVVVVSTAIKKDNPELIAAREKFLPVVRRAEMLAELMRFRNAIAIGGTHGKTTTTSMVAALLDAGGLDPTVINGGIINAYGTNARMGAGEWMVVEADESDGTFLKLPADIAVVTNIDPEHLDHYGNFDAVRAAFRQFVENVPFYGFGVLCLDHPEVQSMVGKIEDRKVITYGENPQADVRYHNVRMDGATSVFDVEIRRRRTGQVIQLNGLRLPMPGRHNVSNATAAVAVAQRLGMEPEAIAKGLASFGGVKRRFTLTGEWNGASIFDDYGHHPVEIKAVLRAAREACQGRIVAVHQPHRYSRLSSLFEDFSACFNDADTILIAPVYAAGEDAIDGVNSQALVNSIKAAGHRDAQFLTGPEALAPVVSKIAQPGDFVVLLGAGSITYWAAALPKELAEISGS.

114 to 120 (GTHGKTT) contacts ATP.

Belongs to the MurCDEF family.

The protein resides in the cytoplasm. It carries out the reaction UDP-N-acetyl-alpha-D-muramate + L-alanine + ATP = UDP-N-acetyl-alpha-D-muramoyl-L-alanine + ADP + phosphate + H(+). The protein operates within cell wall biogenesis; peptidoglycan biosynthesis. Cell wall formation. This is UDP-N-acetylmuramate--L-alanine ligase from Sinorhizobium fredii (strain NBRC 101917 / NGR234).